A 310-amino-acid chain; its full sequence is Homoserine O-acetyltransferase (310 aa).

Cys142 (acyl-thioester intermediate) is an active-site residue. Positions 163 and 192 each coordinate substrate. Residue His235 is the Proton acceptor of the active site. Glu237 is a catalytic residue. Arg249 is a substrate binding site.

Belongs to the MetA family.

The protein localises to the cytoplasm. The enzyme catalyses L-homoserine + acetyl-CoA = O-acetyl-L-homoserine + CoA. It participates in amino-acid biosynthesis; L-methionine biosynthesis via de novo pathway; O-acetyl-L-homoserine from L-homoserine: step 1/1. Functionally, transfers an acetyl group from acetyl-CoA to L-homoserine, forming acetyl-L-homoserine. This chain is Homoserine O-acetyltransferase, found in Parabacteroides distasonis (strain ATCC 8503 / DSM 20701 / CIP 104284 / JCM 5825 / NCTC 11152).